A 154-amino-acid chain; its full sequence is Glycosylation-dependent cell adhesion molecule 1 (154 aa).

A signal peptide spans 1–18; sequence MKFLCILLLASLAATSLA. T34 carries an O-linked (GalNAc...) threonine; partial glycan. A phosphoserine mark is found at S48, S53, S57, S59, and S65. The span at 51 to 65 shows a compositional bias: basic and acidic residues; the sequence is DLSKEPSISREDLIS. Residues 51 to 115 are disordered; that stretch reads DLSKEPSISR…EHAPSDASTT (65 aa). A glycan (N-linked (GlcNAc...) asparagine) is linked at N96.

Belongs to the PP3/GlyCAM-1 family. Highly and specifically expressed in the lactating mammary gland.

The protein localises to the membrane. The protein is Glycosylation-dependent cell adhesion molecule 1 (GLYCAM1) of Capra hircus (Goat).